Consider the following 272-residue polypeptide: Phosphate import ATP-binding protein PstB (272 aa).

The ABC transporter domain maps to Val26 to Ile267. Position 58–65 (Gly58–Ser65) interacts with ATP.

It belongs to the ABC transporter superfamily. Phosphate importer (TC 3.A.1.7) family. In terms of assembly, the complex is composed of two ATP-binding proteins (PstB), two transmembrane proteins (PstC and PstA) and a solute-binding protein (PstS).

The protein resides in the cell inner membrane. It carries out the reaction phosphate(out) + ATP + H2O = ADP + 2 phosphate(in) + H(+). In terms of biological role, part of the ABC transporter complex PstSACB involved in phosphate import. Responsible for energy coupling to the transport system. The chain is Phosphate import ATP-binding protein PstB from Nitrobacter hamburgensis (strain DSM 10229 / NCIMB 13809 / X14).